Consider the following 294-residue polypeptide: Flagellin B1 (294 aa).

Positions 1–8 (MKTRTRKG) are excised as a propeptide.

It belongs to the archaeal flagellin family.

The protein localises to the archaeal flagellum. Functionally, flagellin is the subunit protein which polymerizes to form the filaments of archaeal flagella. The protein is Flagellin B1 (flaB1) of Thermococcus kodakarensis (strain ATCC BAA-918 / JCM 12380 / KOD1) (Pyrococcus kodakaraensis (strain KOD1)).